The chain runs to 423 residues: Galactosylceramide sulfotransferase (423 aa).

Topologically, residues 1–12 (MTLLPKKPCKSK) are cytoplasmic. The helical; Signal-anchor for type II membrane protein transmembrane segment at 13-35 (AKGLLLGALFTSFLLLLYSYVVP) threads the bilayer. Residues 36–423 (PLYPNMAFTT…WKFLRDFLRW (388 aa)) are Lumenal-facing. N-linked (GlcNAc...) asparagine glycans are attached at residues N66 and N312.

Belongs to the galactose-3-O-sulfotransferase family. In terms of tissue distribution, expressed in brain, testis, kidney, stomach, small intestine, liver, and lung. Not detected in heart, skeletal muscle, and spleen.

The protein resides in the golgi apparatus membrane. It carries out the reaction a beta-D-galactosyl-(1&lt;-&gt;1')-N-acylsphing-4-enine + 3'-phosphoadenylyl sulfate = an N-acyl-1-beta-D-(3-O-sulfo)-galactosyl-sphing-4-enine + adenosine 3',5'-bisphosphate + H(+). It catalyses the reaction a 1-O-alkyl-2-acyl-3-O-(beta-D-galactosyl)-sn-glycerol + 3'-phosphoadenylyl sulfate = a 1-O-alkyl-2-acyl-3-(beta-D-3-sulfogalactosyl)-sn-glycerol + adenosine 3',5'-bisphosphate + H(+). The catalysed reaction is a beta-D-Gal-(1&lt;-&gt;1')-ceramide + 3'-phosphoadenylyl sulfate = 1-(3-O-sulfo-beta-D-galactosyl)-ceramide + adenosine 3',5'-bisphosphate + H(+). The enzyme catalyses a 1,2-diacyl-3-O-(beta-D-galactosyl)-sn-glycerol + 3'-phosphoadenylyl sulfate = 1,2-diacyl-3-(3-O-sulfo-beta-D-galactosyl)-sn-glycerol + adenosine 3',5'-bisphosphate + H(+). It carries out the reaction a beta-D-Gal-(1-&gt;4)-beta-D-Glc-(1&lt;-&gt;1)-Cer(d18:1(4E)) + 3'-phosphoadenylyl sulfate = beta-D-3-sulfogalactosyl-(1-&gt;4)-beta-D-glucosyl-(1&lt;-&gt;1')-N-acylsphing-4-enine + adenosine 3',5'-bisphosphate + H(+). It functions in the pathway lipid metabolism; sphingolipid metabolism. Its function is as follows. Catalyzes the transfer of a sulfate group to position 3 of non-reducing beta-galactosyl residues in glycerolipids and sphingolipids, therefore participates in the biosynthesis of sulfoglycolipids. Catalyzes the synthesis of galactosylceramide sulfate (sulfatide), a major lipid component of the myelin sheath and of monogalactosylalkylacylglycerol sulfate (seminolipid), present in spermatocytes. Seems to prefer beta-glycosides at the non-reducing termini of sugar chains attached to a lipid moiety. Also acts on lactosylceramide, galactosyl 1-alkyl-2-sn-glycerol and galactosyl diacylglycerol (in vitro). This is Galactosylceramide sulfotransferase from Mus musculus (Mouse).